The primary structure comprises 216 residues: Adenylate kinase (216 aa).

Residue 10-15 (GAGKGT) coordinates ATP. Positions 30–59 (STGDMFRAAMKAETEMGLQAKSFIDKGALV) are NMP. AMP contacts are provided by residues Thr-31, Arg-36, 57-59 (ALV), 85-88 (GFPR), and Gln-92. Residues 126–163 (GRRICKECGATYHLEFNPPAKADVCDKCGGELYQRSDD) are LID. Residue Arg-127 participates in ATP binding. 2 residues coordinate Zn(2+): Cys-130 and Cys-133. 136 to 137 (TY) lines the ATP pocket. Residues Cys-150 and Cys-153 each contribute to the Zn(2+) site. Residues Arg-160 and Arg-171 each coordinate AMP. ATP is bound at residue Gln-199.

The protein belongs to the adenylate kinase family. Monomer.

Its subcellular location is the cytoplasm. It catalyses the reaction AMP + ATP = 2 ADP. The protein operates within purine metabolism; AMP biosynthesis via salvage pathway; AMP from ADP: step 1/1. Functionally, catalyzes the reversible transfer of the terminal phosphate group between ATP and AMP. Plays an important role in cellular energy homeostasis and in adenine nucleotide metabolism. The protein is Adenylate kinase of Bacillus cereus (strain G9842).